Reading from the N-terminus, the 261-residue chain is Rho-related GTP-binding protein RhoU (261 aa).

The segment at Met1–Ala48 is disordered. Over residues Arg7–Pro16 the composition is skewed to low complexity. The segment covering Gly32–Ala48 has biased composition (gly residues). GTP is bound by residues Gly59–Thr66, Asp106–Gln110, and Thr164–Asp167. Residues Lys180 and Lys251 each participate in a glycyl lysine isopeptide (Lys-Gly) (interchain with G-Cter in ubiquitin) cross-link. Residue Cys259 is the site of S-palmitoyl cysteine attachment.

Belongs to the small GTPase superfamily. Rho family. Interacts with PAK1. Interacts with PAK3. Interacts with ARHGAP30 in a GTP-independent manner. In its GTP-loaded conformation, interacts with ARHGAP31. Interacts with PTK2B/PYK2. Interacts with PAK4; interaction protects RHOU from ubiquitination and subsequent degradation. The cofactor is Mg(2+). Post-translationally, tyrosine phosphorylated by SRC in response to PTK2B/PYK2 activation. In terms of processing, ubiquitinated. 'Lys-48'-linked ubiquitination at Lys-180 and Lys-251 by the ECS(RAB40A) complex leading to its degradation.

The protein resides in the cell membrane. It localises to the golgi apparatus membrane. Its subcellular location is the cell junction. The protein localises to the focal adhesion. It is found in the cell projection. The protein resides in the podosome. Its function is as follows. Binds to and activates protein kinase PAK1. Plays a role in the regulation of cell morphology, cytoskeletal organization and focal adhesion assembly during cell migration. Also stimulates quiescent cells to reenter the cell cycle. Has no detectable GTPase activity but its high intrinsic guanine nucleotide exchange activity suggests it is constitutively GTP-bound. In Mus musculus (Mouse), this protein is Rho-related GTP-binding protein RhoU.